The following is a 417-amino-acid chain: UDP-N-acetylglucosamine 1-carboxyvinyltransferase (417 aa).

22 to 23 (KN) is a binding site for phosphoenolpyruvate. R91 contributes to the UDP-N-acetyl-alpha-D-glucosamine binding site. Residue C115 is the Proton donor of the active site. C115 bears the 2-(S-cysteinyl)pyruvic acid O-phosphothioketal mark. Residues 120–124 (RPVDL), D304, and I326 each bind UDP-N-acetyl-alpha-D-glucosamine.

The protein belongs to the EPSP synthase family. MurA subfamily.

It localises to the cytoplasm. It carries out the reaction phosphoenolpyruvate + UDP-N-acetyl-alpha-D-glucosamine = UDP-N-acetyl-3-O-(1-carboxyvinyl)-alpha-D-glucosamine + phosphate. It participates in cell wall biogenesis; peptidoglycan biosynthesis. Functionally, cell wall formation. Adds enolpyruvyl to UDP-N-acetylglucosamine. This Nitratidesulfovibrio vulgaris (strain DP4) (Desulfovibrio vulgaris) protein is UDP-N-acetylglucosamine 1-carboxyvinyltransferase.